We begin with the raw amino-acid sequence, 201 residues long: MNTVLFALGAYLIGSISFAVVVSKCFRLADPRSYGSKNPGATNVLRSGNKKAAILTLLGDGAKGFLAVWLVKHFGPGYGVHENGVALVAIAVFLGHLWPVFFRFVGGKGVATALGVLLALNGWLGLATLVTWLVIAYAFRYSSLAALIAAIFAPFYYGLLFGPDVILLAVLAMSILLVYRHSKNIGNLLAGKESRLGSKKK.

The next 6 membrane-spanning stretches (helical) occupy residues 3–23, 51–71, 85–105, 116–136, 137–157, and 158–178; these read TVLF…VVVS, KAAI…VWLV, VALV…FRFV, VLLA…LVIA, YAFR…PFYY, and GLLF…ILLV.

This sequence belongs to the PlsY family. In terms of assembly, probably interacts with PlsX.

Its subcellular location is the cell inner membrane. The enzyme catalyses an acyl phosphate + sn-glycerol 3-phosphate = a 1-acyl-sn-glycero-3-phosphate + phosphate. The protein operates within lipid metabolism; phospholipid metabolism. In terms of biological role, catalyzes the transfer of an acyl group from acyl-phosphate (acyl-PO(4)) to glycerol-3-phosphate (G3P) to form lysophosphatidic acid (LPA). This enzyme utilizes acyl-phosphate as fatty acyl donor, but not acyl-CoA or acyl-ACP. The chain is Glycerol-3-phosphate acyltransferase from Janthinobacterium sp. (strain Marseille) (Minibacterium massiliensis).